Consider the following 315-residue polypeptide: MSKIYQDNSLTIGNTPLVRLNRIGNGNILVKIESRNPSFSVKCRIGANMIWHAEKNNNINKNVKLIEATSGNTGIALAYVAASRNYRLTLTMPETMSIERKKILKSLGAELILTDGRYGMKGAISKANDIISRNPSKYFLLKQFENPANPEIHQITTGPEIWNDTNGNLDILISAVGTGGTITGITRYIKKIKRKKNLISIAVEPSESPVITQFLAGKAIEPGPHKIQGIGPGFIPKNLDLTIIDQVITVSSEEAILTAKELMKKEGILAGISSGAALYAAIKIQQQKKFSDKKIVVILPSSGERYLSTELFSEL.

Hydrogen sulfide contacts are provided by Asn-8 and Arg-35. Residue Lys-42 is modified to N6-(pyridoxal phosphate)lysine. Pyridoxal 5'-phosphate contacts are provided by residues Asn-72 and 177 to 181; that span reads GTGGT. Leu-269 contributes to the hydrogen sulfide binding site. Pyridoxal 5'-phosphate is bound at residue Ser-273.

The protein belongs to the cysteine synthase/cystathionine beta-synthase family. In terms of assembly, homodimer. Pyridoxal 5'-phosphate serves as cofactor.

The enzyme catalyses O-acetyl-L-serine + hydrogen sulfide = L-cysteine + acetate. It functions in the pathway amino-acid biosynthesis; L-cysteine biosynthesis; L-cysteine from L-serine: step 2/2. The chain is Cysteine synthase (cysK) from Buchnera aphidicola subsp. Acyrthosiphon pisum (strain APS) (Acyrthosiphon pisum symbiotic bacterium).